The following is a 413-amino-acid chain: Arginine biosynthesis bifunctional protein ArgJ (413 aa).

Substrate is bound by residues threonine 154, lysine 180, threonine 191, glutamate 277, asparagine 408, and threonine 413. The active-site Nucleophile is threonine 191.

The protein belongs to the ArgJ family. Heterotetramer of two alpha and two beta chains.

It is found in the cytoplasm. The enzyme catalyses N(2)-acetyl-L-ornithine + L-glutamate = N-acetyl-L-glutamate + L-ornithine. It catalyses the reaction L-glutamate + acetyl-CoA = N-acetyl-L-glutamate + CoA + H(+). It participates in amino-acid biosynthesis; L-arginine biosynthesis; L-ornithine and N-acetyl-L-glutamate from L-glutamate and N(2)-acetyl-L-ornithine (cyclic): step 1/1. It functions in the pathway amino-acid biosynthesis; L-arginine biosynthesis; N(2)-acetyl-L-ornithine from L-glutamate: step 1/4. Its function is as follows. Catalyzes two activities which are involved in the cyclic version of arginine biosynthesis: the synthesis of N-acetylglutamate from glutamate and acetyl-CoA as the acetyl donor, and of ornithine by transacetylation between N(2)-acetylornithine and glutamate. The sequence is that of Arginine biosynthesis bifunctional protein ArgJ from Synechocystis sp. (strain ATCC 27184 / PCC 6803 / Kazusa).